We begin with the raw amino-acid sequence, 172 residues long: 2S seed storage-like protein (172 aa).

Residues 1–35 form the signal peptide; that stretch reads MGVFSPSTTRLTLKWFSLSVALFLLFHWGIPSVDG. The interval 108 to 172 is disordered; that stretch reads FMDSDSQEDA…RYSMTGSSFK (65 aa). Over residues 151 to 160 the composition is skewed to basic and acidic residues; sequence EPPRRCDIQR.

Belongs to the 2S seed storage albumins family.

The sequence is that of 2S seed storage-like protein from Picea glauca (White spruce).